The primary structure comprises 84 residues: Small ribosomal subunit protein uS17 (84 aa).

Belongs to the universal ribosomal protein uS17 family. In terms of assembly, part of the 30S ribosomal subunit.

Functionally, one of the primary rRNA binding proteins, it binds specifically to the 5'-end of 16S ribosomal RNA. The polypeptide is Small ribosomal subunit protein uS17 (Aliivibrio fischeri (strain ATCC 700601 / ES114) (Vibrio fischeri)).